The sequence spans 412 residues: Putative competence-damage inducible protein (412 aa).

It belongs to the CinA family.

In Bacillus cytotoxicus (strain DSM 22905 / CIP 110041 / 391-98 / NVH 391-98), this protein is Putative competence-damage inducible protein.